We begin with the raw amino-acid sequence, 301 residues long: Probable alpha-L-glutamate ligase (301 aa).

Positions 104 to 287 (LQLLSRKGVG…VAGRIVSFIE (184 aa)) constitute an ATP-grasp domain. Residues K141, 178 to 179 (EF), D187, and 211 to 213 (RSN) each bind ATP. Residues D248, E260, and N262 each coordinate Mg(2+). Mn(2+) contacts are provided by D248, E260, and N262.

It belongs to the RimK family. It depends on Mg(2+) as a cofactor. The cofactor is Mn(2+).

This chain is Probable alpha-L-glutamate ligase, found in Thioalkalivibrio sulfidiphilus (strain HL-EbGR7).